The primary structure comprises 444 residues: Elongation factor 1-alpha (444 aa).

Residues 15–236 (KPHINLAVVG…VLDTFQPPPR (222 aa)) enclose the tr-type G domain. Residues 24-31 (GHVDNGKS) are G1. Residue 24-31 (GHVDNGKS) coordinates GTP. S31 lines the Mg(2+) pocket. The interval 80–84 (GVTIE) is G2. Positions 101-104 (DLPG) are G3. GTP contacts are provided by residues 101–105 (DLPGH) and 163–166 (NKMD). Residues 163–166 (NKMD) are G4. The interval 202–204 (SAV) is G5.

This sequence belongs to the TRAFAC class translation factor GTPase superfamily. Classic translation factor GTPase family. EF-Tu/EF-1A subfamily.

It localises to the cytoplasm. The enzyme catalyses GTP + H2O = GDP + phosphate + H(+). Its function is as follows. GTP hydrolase that promotes the GTP-dependent binding of aminoacyl-tRNA to the A-site of ribosomes during protein biosynthesis. This is Elongation factor 1-alpha from Pyrobaculum arsenaticum (strain DSM 13514 / JCM 11321 / PZ6).